Reading from the N-terminus, the 587-residue chain is 5-aminolevulinate synthase, erythroid-specific, mitochondrial (587 aa).

A mitochondrion-targeting transit peptide spans 1–49 (MVAAAMLLRSCPVLSKGPTGLLGKVAKTYQFLFGIGRCPILATQGPTCS). Succinyl-CoA is bound at residue R163. Residues C258 and F259 each contribute to the pyridoxal 5'-phosphate site. Succinyl-CoA-binding residues include S280 and K299. S332, H360, and T388 together coordinate pyridoxal 5'-phosphate. K391 is a catalytic residue. K391 carries the N6-(pyridoxal phosphate)lysine modification. T420 and T421 together coordinate pyridoxal 5'-phosphate. T508 contacts succinyl-CoA.

It belongs to the class-II pyridoxal-phosphate-dependent aminotransferase family. In terms of assembly, homodimer. Interacts with SUCLA2. The cofactor is pyridoxal 5'-phosphate. As to expression, erythroid-specific.

The protein resides in the mitochondrion inner membrane. The catalysed reaction is succinyl-CoA + glycine + H(+) = 5-aminolevulinate + CO2 + CoA. The protein operates within porphyrin-containing compound metabolism; protoporphyrin-IX biosynthesis; 5-aminolevulinate from glycine: step 1/1. Functionally, catalyzes the pyridoxal 5'-phosphate (PLP)-dependent condensation of succinyl-CoA and glycine to form aminolevulinic acid (ALA), with CoA and CO2 as by-products. Contributes significantly to heme formation during erythropoiesis. The sequence is that of 5-aminolevulinate synthase, erythroid-specific, mitochondrial (Alas2) from Rattus norvegicus (Rat).